Reading from the N-terminus, the 307-residue chain is Aspartate carbamoyltransferase catalytic subunit (307 aa).

2 residues coordinate carbamoyl phosphate: arginine 58 and threonine 59. Lysine 86 provides a ligand contact to L-aspartate. Carbamoyl phosphate-binding residues include arginine 108, histidine 136, and glutamine 139. Residues arginine 169 and arginine 223 each coordinate L-aspartate. 2 residues coordinate carbamoyl phosphate: glycine 264 and proline 265.

The protein belongs to the aspartate/ornithine carbamoyltransferase superfamily. ATCase family. In terms of assembly, heterododecamer (2C3:3R2) of six catalytic PyrB chains organized as two trimers (C3), and six regulatory PyrI chains organized as three dimers (R2).

The catalysed reaction is carbamoyl phosphate + L-aspartate = N-carbamoyl-L-aspartate + phosphate + H(+). It participates in pyrimidine metabolism; UMP biosynthesis via de novo pathway; (S)-dihydroorotate from bicarbonate: step 2/3. In terms of biological role, catalyzes the condensation of carbamoyl phosphate and aspartate to form carbamoyl aspartate and inorganic phosphate, the committed step in the de novo pyrimidine nucleotide biosynthesis pathway. This chain is Aspartate carbamoyltransferase catalytic subunit, found in Syntrophus aciditrophicus (strain SB).